A 196-amino-acid polypeptide reads, in one-letter code: Imidazoleglycerol-phosphate dehydratase (196 aa).

It belongs to the imidazoleglycerol-phosphate dehydratase family.

The protein resides in the cytoplasm. The catalysed reaction is D-erythro-1-(imidazol-4-yl)glycerol 3-phosphate = 3-(imidazol-4-yl)-2-oxopropyl phosphate + H2O. Its pathway is amino-acid biosynthesis; L-histidine biosynthesis; L-histidine from 5-phospho-alpha-D-ribose 1-diphosphate: step 6/9. The chain is Imidazoleglycerol-phosphate dehydratase from Clostridium novyi (strain NT).